A 459-amino-acid polypeptide reads, in one-letter code: Cysteine--tRNA ligase (459 aa).

Residue C29 coordinates Zn(2+). The 'HIGH' region signature appears at 31–41 (MTVYDLCHLGH). Positions 213, 238, and 242 each coordinate Zn(2+). The 'KMSKS' region motif lies at 270-274 (KMSKS). Residue K273 coordinates ATP.

Belongs to the class-I aminoacyl-tRNA synthetase family. In terms of assembly, monomer. Zn(2+) serves as cofactor.

It localises to the cytoplasm. The catalysed reaction is tRNA(Cys) + L-cysteine + ATP = L-cysteinyl-tRNA(Cys) + AMP + diphosphate. This is Cysteine--tRNA ligase from Albidiferax ferrireducens (strain ATCC BAA-621 / DSM 15236 / T118) (Rhodoferax ferrireducens).